The sequence spans 1468 residues: MPYSSQQNGYTSASTSRLSEQTSSHSRSSREDRHLTEKGRRPPSPEARHRSDRDYDRRRSTEYVRDDDYRRSSRSSHDSRYADAYDHWRSARSAYSPTPRDDRRDEARNDLSSTKRHRSPEHSTSRLRHRSPESAHRRQNGTANRLDSKPDRGGDRKTGEALDSGRSRWSQRAYEYDDWRNERPSARYERYRHDREPHRSRREDEYETKRSRDDSNGNSIYAPTRRSRSRSRSRSRSRDRYRSRDHSRERRRERSRDRSNGTYSSRDDRRPKADRSAHTIKRDEHSTRLNGTSEDSKDLRHESQRRVSASVQSASEGPASTPVARAVYIKHAEVDQEAPAPPTTRDYHSCPQRWPDQADSAVRASSAPNGSATAPSRSDRPPANGSSGRHSPRSLPTREKAEEARTSSTRRPSSQTNDNVNNSRDPLTQRKATSERSFGHVLLPHELPVECRGKNYMATATYKEGVKSIYKSAADKHLVDVDTRDPRRLGKKSSRYRESLHSASFRWDSNSRGKKPLPPPRNLVLTNLSGLLQPHQILLHILPHGRIESSKLEIDPKIGQSLGIFRVTFAHDFDEHGKPLESMPAGQNPQHGAKVAKAACLALNGRMIGQTRAQAFLDRDGEVIAERIKAKLAENEHKLRPTIVPPAPPAAASSSPATPSTTKQSMPPPQVPRGPKVFMPAAPSPSYASSPASARANTDRYEYSATSHSRYRSSYEESRKLASSETYHRRRGTEEYDTYNRSKPYADAQVPAGSRSETRKDIKRPDEEILNELRDKKRPYVHIPRPKNCDIDVTSVEAQLRSTAPIWVREGQKGFYAAFHTSKEANQCKVVNETLTIGGYTLQVDVRSAPSQHAPSQQIRTPSGKHASVPLSMPAPPKQERKAIDTGLRPPTADEKLKVDWSAAELQDAVFRMLQKELADTFVRDVKSRVVGPYLTAYLKPDGEGGKMLAKATMKKPVIPTSINDHGTTLFEATGEARLPSFRKLAGAHPKKKASDADTTTSQAKRDQTDAKKKRGHTHRSKVHRDRDVSSSENESDDMERGMVVAARRNSYTRSKSSTKRRGAAAWLLEASDAEAGTDDVDSTETDALSRSVSASVEPTGEEQIEVDVGAKAKKIPKVKAATVSKKKGTTAARKKLDVAPPEAVVEADQGSETATPETDVPIKTAAAKAKVKPAKTSAKAKSALVDPFEAGLVEDSEDCHYLRLALEHLSRTGELASEHTLPDEIELEVEAEEQAMAAGGIPKHSTGSARTEGYYRIPPEQKAMHLPDRNKATEDVDTSSNAQILQSARNNRADSRRLVLGIEQHKRETATDTDIFKFNQLRTRKKQLKFAKSPIHDWGLYAMELIPAGDMVIEYVGEVVRQQVADEREKQYERQGNFSTYLFRVDDDLVVDATHKGNIARLMNHCCTPNCNAKILTLNGEKRIVLFAKTAIRAGEELTYDYKFQSSADDEDAIPCLCGSPGCRRFL.

A compositionally biased stretch (polar residues) spans 1–11 (MPYSSQQNGYT). 5 disordered regions span residues 1 to 439 (MPYS…RSFG), 636 to 737 (EHKL…EEYD), 848 to 884 (SAPS…RKAI), 986 to 1103 (AGAH…TGEE), and 1141 to 1162 (PPEA…TDVP). Residues 12–26 (SASTSRLSEQTSSHS) show a composition bias toward low complexity. Basic and acidic residues-rich tracts occupy residues 28–40 (SSRE…EKGR), 46–89 (EARH…DHWR), 99–109 (PRDDRRDEARN), 120–136 (PEHS…ESAH), 146–166 (LDSK…DSGR), and 174–215 (YEYD…RDDS). The segment covering 225-235 (RRSRSRSRSRS) has biased composition (basic residues). 2 stretches are compositionally biased toward basic and acidic residues: residues 236–287 (RSRD…EHST) and 294–305 (EDSKDLRHESQR). Polar residues-rich tracts occupy residues 306 to 315 (RVSASVQSAS) and 366 to 376 (SAPNGSATAPS). Positions 396 to 405 (PTREKAEEAR) are enriched in basic and acidic residues. The span at 406-416 (TSSTRRPSSQT) shows a compositional bias: low complexity. Residues 417–426 (NDNVNNSRDP) are compositionally biased toward polar residues. Low complexity-rich tracts occupy residues 650 to 662 (AAAS…PSTT) and 680 to 694 (PAAP…PASA). Residues 713–722 (SSYEESRKLA) show a composition bias toward basic and acidic residues. Residues 849-861 (APSQHAPSQQIRT) show a composition bias toward polar residues. Residues 1012–1024 (KKKRGHTHRSKVH) show a composition bias toward basic residues. Residues 1072 to 1085 (SDAEAGTDDVDSTE) are compositionally biased toward acidic residues. The span at 1086-1097 (TDALSRSVSASV) shows a compositional bias: polar residues. Residues 1293–1298 (RADSRR) carry the RxxxRR motif motif. The SET domain occupies 1327-1444 (KQLKFAKSPI…AGEELTYDYK (118 aa)). Position 1443 (Tyr1443) interacts with S-adenosyl-L-methionine. In terms of domain architecture, Post-SET spans 1453 to 1468 (DAIPCLCGSPGCRRFL).

The protein belongs to the class V-like SAM-binding methyltransferase superfamily. In terms of assembly, component of the Set1C/COMPASS complex.

It localises to the nucleus. The protein localises to the chromosome. The enzyme catalyses L-lysyl(4)-[histone H3] + 3 S-adenosyl-L-methionine = N(6),N(6),N(6)-trimethyl-L-lysyl(4)-[histone H3] + 3 S-adenosyl-L-homocysteine + 3 H(+). It catalyses the reaction N(6)-methyl-L-lysyl(4)-[histone H3] + S-adenosyl-L-methionine = N(6),N(6)-dimethyl-L-lysyl(4)-[histone H3] + S-adenosyl-L-homocysteine + H(+). It carries out the reaction N(6),N(6)-dimethyl-L-lysyl(4)-[histone H3] + S-adenosyl-L-methionine = N(6),N(6),N(6)-trimethyl-L-lysyl(4)-[histone H3] + S-adenosyl-L-homocysteine + H(+). Functionally, catalytic component of the COMPASS (Set1C) complex that specifically mono-, di- and trimethylates histone H3 to form H3K4me1/2/3. Binds RNAs which might negatively affect its histone methyltransferase activity. COMPASS recognizes ubiquitinated H2B on one face of the nucleosome which stimulates the methylation of H3 on the opposing face. This is Histone-lysine N-methyltransferase, H3 lysine-4 specific (SET1) from Mycosarcoma maydis (Corn smut fungus).